We begin with the raw amino-acid sequence, 290 residues long: Lipoyl synthase (290 aa).

Positions 44, 49, 55, 70, 74, 77, and 282 each coordinate [4Fe-4S] cluster. A Radical SAM core domain is found at 56–271 (WGEGTATFMI…ELLGKEMGFR (216 aa)).

The protein belongs to the radical SAM superfamily. Lipoyl synthase family. Requires [4Fe-4S] cluster as cofactor.

The protein resides in the cytoplasm. The catalysed reaction is [[Fe-S] cluster scaffold protein carrying a second [4Fe-4S](2+) cluster] + N(6)-octanoyl-L-lysyl-[protein] + 2 oxidized [2Fe-2S]-[ferredoxin] + 2 S-adenosyl-L-methionine + 4 H(+) = [[Fe-S] cluster scaffold protein] + N(6)-[(R)-dihydrolipoyl]-L-lysyl-[protein] + 4 Fe(3+) + 2 hydrogen sulfide + 2 5'-deoxyadenosine + 2 L-methionine + 2 reduced [2Fe-2S]-[ferredoxin]. The protein operates within protein modification; protein lipoylation via endogenous pathway; protein N(6)-(lipoyl)lysine from octanoyl-[acyl-carrier-protein]: step 2/2. Catalyzes the radical-mediated insertion of two sulfur atoms into the C-6 and C-8 positions of the octanoyl moiety bound to the lipoyl domains of lipoate-dependent enzymes, thereby converting the octanoylated domains into lipoylated derivatives. This is Lipoyl synthase from Flavobacterium psychrophilum (strain ATCC 49511 / DSM 21280 / CIP 103535 / JIP02/86).